The sequence spans 34 residues: Cycloamanide E proprotein (34 aa).

Residues 1–10 constitute a propeptide that is removed on maturation; sequence MSDINAARLP. A cross-link (cyclopeptide (Ser-Pro)) is located at residues 11–17; the sequence is SFFFPVP. The propeptide occupies 18 to 34; the sequence is CISDDIEMVLTRGESLC.

The protein belongs to the MSDIN fungal toxin family. Processed by the macrocyclase-peptidase enzyme POPB to yield a cyclic decapeptide. POPB first removes 10 residues from the N-terminus. Conformational trapping of the remaining peptide forces the enzyme to release this intermediate rather than proceed to macrocyclization. The enzyme rebinds the remaining peptide in a different conformation and catalyzes macrocyclization of the N-terminal 7 residues.

Its function is as follows. Cyclic heptapeptide that belongs to the MSDIN-like toxin family responsible for a large number of food poisoning cases and deaths. Cycloaminide E is structurally related to other cycloamanides that are non-toxic to mammals but show immunosuppressive activity. The chain is Cycloamanide E proprotein from Amanita phalloides (Death cap).